We begin with the raw amino-acid sequence, 337 residues long: Cathepsin L-like (337 aa).

A signal peptide spans 1 to 18 (MNRFILLALVAAVVAVNS). Residues 19–119 (AKLSRQIESA…SSFLAPFNVQ (101 aa)) constitute a propeptide, activation peptide. N108 carries N-linked (GlcNAc...) asparagine glycosylation. Disulfide bonds link C141-C184, C175-C217, and C276-C326. C144 is an active-site residue. Residues H283 and N304 contribute to the active site.

Belongs to the peptidase C1 family. As to expression, expressed in intestine, pharynx posterior bulb, hypodermis and cuticle (at protein level). Expressed in germ cells, developing oocytes, sheath cells surrounding germ cells and oocytes, and in the eggshell (at protein level).

The protein localises to the secreted. It localises to the cytoplasmic granule. Its subcellular location is the lysosome. The protein resides in the endosome. It is found in the cytoplasmic vesicle. The protein localises to the phagosome. The catalysed reaction is Specificity close to that of papain. As compared to cathepsin B, cathepsin L exhibits higher activity toward protein substrates, but has little activity on Z-Arg-Arg-NHMec, and no peptidyl-dipeptidase activity.. Cysteine protease which plays an essential role in the degradation of proteins in lysosomes. During early embryogenesis, maternally required for the proteolytic processing of yolk proteins in platelets, a lysosome-like structure where a slow and controlled degradation of yolk proteins occurs. In the gonad, required for the clearance of apoptotic germ cells in the engulfing cell phagolysosomes. In embryos, required for the degradation of endocytic and autophagic cargos. In embryos, may play a role in the degradation of lipid-containing droplets. Required for larval development. The polypeptide is Cathepsin L-like (Caenorhabditis elegans).